We begin with the raw amino-acid sequence, 328 residues long: DNA-directed RNA polymerase subunit alpha (328 aa).

The interval 1 to 232 (MSTQGFLKPR…DQISVFAALE (232 aa)) is alpha N-terminal domain (alpha-NTD). The segment at 248 to 328 (IDPVLLRPVD…NWPPLGLERP (81 aa)) is alpha C-terminal domain (alpha-CTD).

This sequence belongs to the RNA polymerase alpha chain family. Homodimer. The RNAP catalytic core consists of 2 alpha, 1 beta, 1 beta' and 1 omega subunit. When a sigma factor is associated with the core the holoenzyme is formed, which can initiate transcription.

It catalyses the reaction RNA(n) + a ribonucleoside 5'-triphosphate = RNA(n+1) + diphosphate. DNA-dependent RNA polymerase catalyzes the transcription of DNA into RNA using the four ribonucleoside triphosphates as substrates. The sequence is that of DNA-directed RNA polymerase subunit alpha from Bordetella avium (strain 197N).